Reading from the N-terminus, the 188-residue chain is Pro-adrenomedullin (188 aa).

A signal peptide spans 1 to 21 (MKLVPVALLYLGSLAFLGVDT). Arginine 41 carries the arginine amide modification. Positions 45 to 92 (ELRESSSYPTGLADVKAGPVQTLIRPQDVKGASRSPQASSPDAARIRV) are excised as a propeptide. Residues 69–89 (RPQDVKGASRSPQASSPDAAR) form a disordered region. A disulfide bridge links cysteine 110 with cysteine 115. Positions 129–175 (DKDKDGSAPRSKISPQGYGRRRRRSLPEAGLGRTLLQPPEPKLRGAP) are disordered. Tyrosine 146 carries the post-translational modification Tyrosine amide. A propeptide spans 153 to 188 (SLPEAGLGRTLLQPPEPKLRGAPDSRVHQVLATLRI) (preproAM C-terminal fragment).

The protein belongs to the adrenomedullin family.

It is found in the secreted. Adrenomedullin/ADM and proadrenomedullin N-20 terminal peptide/PAMP are peptide hormones that act as potent hypotensive and vasodilatator agents. Numerous actions have been reported most related to the physiologic control of fluid and electrolyte homeostasis. In terms of biological role, ADM function is mediated by the CALCRL-RAMP2 and CALCRL-RAMP3 receptor complexes with ADM showing the highest potency for the CALCRL-RAMP2 complex. The protein is Pro-adrenomedullin (ADM) of Bos taurus (Bovine).